A 137-amino-acid chain; its full sequence is MSKPTNSAPSQRMLRVGEQVRAAITQVLQRGEVRDDLIEKTVISISEVRMSTDLKVATAYVSPLGVSDHDTVIAALNRHAKYIRGRIGGQLRQMKYMPEVRFRDDTSFDNYQKIDALLRSPEVARDLGPDEDKQEDE.

The protein belongs to the RbfA family. As to quaternary structure, monomer. Binds 30S ribosomal subunits, but not 50S ribosomal subunits or 70S ribosomes.

It is found in the cytoplasm. Functionally, one of several proteins that assist in the late maturation steps of the functional core of the 30S ribosomal subunit. Associates with free 30S ribosomal subunits (but not with 30S subunits that are part of 70S ribosomes or polysomes). Required for efficient processing of 16S rRNA. May interact with the 5'-terminal helix region of 16S rRNA. This Allorhizobium ampelinum (strain ATCC BAA-846 / DSM 112012 / S4) (Agrobacterium vitis (strain S4)) protein is Ribosome-binding factor A.